The primary structure comprises 202 residues: Transmembrane 4 L6 family member 1 (202 aa).

At 1 to 9 the chain is on the cytoplasmic side; sequence MCYVKCARY. A helical transmembrane segment spans residues 10-30; it reads IGYSLVWAAVFCIVANALLYF. The Extracellular segment spans residues 31 to 49; that stretch reads PNGETKYATEDHLSRFVWY. A helical transmembrane segment spans residues 50 to 70; sequence FAGIVGGGLLMLLPAFVFIGM. The Cytoplasmic segment spans residues 71–93; that stretch reads DEEDCCGCCGYENYGKRCSMLSS. A helical transmembrane segment spans residues 94 to 114; the sequence is VLAALIGIVGSAYCVIVASLG. The Extracellular portion of the chain corresponds to 115-161; it reads LAEGPKCSDAHGVWNYTFASTEGQYLLNSSMWSKCYEPKHIVEWHVT. N-linked (GlcNAc...) asparagine glycosylation is found at N129 and N142. A helical transmembrane segment spans residues 162 to 182; sequence LFSILLAFAAVEFILCLIQVI. Residues 183-202 lie on the Cytoplasmic side of the membrane; the sequence is NGMLGGLCGYCCSRQQQYNC.

Belongs to the L6 tetraspanin family. In terms of assembly, present in high molecular weight complexes in tumor cells. Interacts with SDCBP2. In terms of tissue distribution, highly expressed in skin and lung. Moderately expressed in lymph nodes and kidneys. Also present in thymic stroma and fibroblasts.

The protein resides in the membrane. The sequence is that of Transmembrane 4 L6 family member 1 (Tm4sf1) from Mus musculus (Mouse).